The chain runs to 483 residues: Peroxisomal biogenesis factor 3 (483 aa).

The Peroxisomal segment spans residues 1–14 (MTGNRSLVQRHRKK). A helical membrane pass occupies residues 15 to 35 (FVVSSVLFATLFATCAITVYF). Topologically, residues 36–483 (SKRWLYKQHL…SACVYSNFGL (448 aa)) are cytoplasmic. Disordered stretches follow at residues 119–149 (GLSS…VSET) and 230–253 (NNLP…TRSI). Polar residues predominate over residues 242–253 (SDGTIDTDTRSI).

It belongs to the peroxin-3 family.

The protein resides in the peroxisome membrane. In terms of biological role, involved in peroxisome biosynthesis. The sequence is that of Peroxisomal biogenesis factor 3 (PEX3) from Kluyveromyces lactis (strain ATCC 8585 / CBS 2359 / DSM 70799 / NBRC 1267 / NRRL Y-1140 / WM37) (Yeast).